Reading from the N-terminus, the 309-residue chain is uncharacterized protein (309 aa).

Residues 23–43 form a helical membrane-spanning segment; the sequence is ALVLSSIVNILLLLLIYSTVF.

It belongs to the chlamydial CPn_0593/CT_474/TC_0759 family.

It is found in the membrane. This is an uncharacterized protein from Chlamydia trachomatis serovar D (strain ATCC VR-885 / DSM 19411 / UW-3/Cx).